Reading from the N-terminus, the 180-residue chain is Cell division protein ZapC (180 aa).

It belongs to the ZapC family. As to quaternary structure, interacts directly with FtsZ.

It localises to the cytoplasm. Its function is as follows. Contributes to the efficiency of the cell division process by stabilizing the polymeric form of the cell division protein FtsZ. Acts by promoting interactions between FtsZ protofilaments and suppressing the GTPase activity of FtsZ. This is Cell division protein ZapC from Vibrio vulnificus (strain CMCP6).